A 203-amino-acid chain; its full sequence is Galactoside O-acetyltransferase (203 aa).

Positions 17, 71, 85, and 93 each coordinate substrate. Residue Asn85 participates in acetyl-CoA binding. His115 (proton donor/acceptor) is an active-site residue. Acetyl-CoA-binding positions include Ser142, Ala160, 165-166 (TK), Arg180, and Arg183.

This sequence belongs to the transferase hexapeptide repeat family. Homotrimer. In terms of processing, the N-terminus of this protein is heterogeneous because the initiator methionine is only partially cleaved.

The protein resides in the cytoplasm. It carries out the reaction a beta-D-galactoside + acetyl-CoA = a 6-acetyl-beta-D-galactoside + CoA. Its function is as follows. Catalyzes the CoA-dependent transfer of an acetyl group to the 6-O-methyl position of a range of galactosides, glucosides, and lactosides. May assist cellular detoxification by acetylating non-metabolizable pyranosides, thereby preventing their reentry into the cell. This is Galactoside O-acetyltransferase (lacA) from Escherichia coli (strain K12).